We begin with the raw amino-acid sequence, 333 residues long: MTTKDHSLATESPTLQQLGEFAVIDRLVRGRRQPATVLLGPGDDAALVSAGDGRTVVSTDMLVQDSHFRLDWSTPQDVGRKAIAQNAADIEAMGARATAFVVGFGAPAETPAAQASALVDGMWEEAGRIGAGIVGGDLVSCRQWVVSVTAIGDLDGRAPVLRSGAKAGSVLAVVGELGRSAAGYALWCNGIEDFAELRRRHLVPQPPYGHGAAAAAVGAQAMIDVSDGLLADLRHIAEASGVRIDLSAAALAADRDALTAAATALGTDPWPWVLSGGEDHALVACFVGPVPAGWRTIGRVLDGPARVLVDGEEWTGYAGWQSFGEPDNQGSLG.

Residues D44, S58, T59, and D60 each coordinate Mg(2+). H67 is a substrate binding site. Mg(2+) contacts are provided by D89 and D137. ATP contacts are provided by residues 136-137 (GD) and R162. D224 contributes to the Mg(2+) binding site. An ATP-binding site is contributed by S226. D227 is a Mg(2+) binding site. Substrate-binding residues include E278 and W320.

This sequence belongs to the thiamine-monophosphate kinase family.

The catalysed reaction is thiamine phosphate + ATP = thiamine diphosphate + ADP. The protein operates within cofactor biosynthesis; thiamine diphosphate biosynthesis; thiamine diphosphate from thiamine phosphate: step 1/1. Functionally, catalyzes the ATP-dependent phosphorylation of thiamine-monophosphate (TMP) to form thiamine-pyrophosphate (TPP), the active form of vitamin B1. This is Thiamine-monophosphate kinase from Mycobacterium tuberculosis (strain CDC 1551 / Oshkosh).